The following is a 317-amino-acid chain: Melanocyte-stimulating hormone receptor (317 aa).

Residues 1 to 37 lie on the Extracellular side of the membrane; it reads MPMQGAQRKLLGSLNSTPTATSNLGLAANHTGAPCLE. Asparagine 29 carries an N-linked (GlcNAc...) asparagine glycan. Residues 38–63 form a helical membrane-spanning segment; the sequence is VSIPDGLFLSLGLVSLVENVLVVAAI. Residues 64-72 are Cytoplasmic-facing; the sequence is AKNRNLHSS. A helical transmembrane segment spans residues 73 to 93; the sequence is MYCFICCLALSDLLVSGSNML. Residues 94–118 are Extracellular-facing; sequence ETAVILLLEAGALATRTSAVQRLHN. Residues 119 to 140 traverse the membrane as a helical segment; that stretch reads TIDVLTCSSMLCSLCFLGAIAV. Residues 141-163 lie on the Cytoplasmic side of the membrane; the sequence is DRYISIFYALRYHSIVTLPRTQR. The helical transmembrane segment at 164–183 threads the bilayer; the sequence is VIAAIWVASVLSSTLFITYY. At 184 to 191 the chain is on the extracellular side; the sequence is DHAAVLLC. A helical membrane pass occupies residues 192–211; that stretch reads LVVFFLAMLVLMAVLYVHML. Topologically, residues 212–240 are cytoplasmic; it reads ARACQHAHGIIRLHKRQSPAHQGFGLRGA. A helical transmembrane segment spans residues 241 to 266; it reads ATLTILLGIFFLCWGPFFLHLTLVVF. The Extracellular portion of the chain corresponds to 267-279; the sequence is CPQHLTCSCIFKN. A helical membrane pass occupies residues 280-300; sequence FKVFLTLIICNTIIDPLIYAF. Residues 301–317 lie on the Cytoplasmic side of the membrane; sequence RSQELRRTLKEVLLCSW. Residue cysteine 315 is the site of S-palmitoyl cysteine attachment.

The protein belongs to the G-protein coupled receptor 1 family. In terms of assembly, interacts with MGRN1, but does not undergo MGRN1-mediated ubiquitination; this interaction competes with GNAS-binding and thus inhibits agonist-induced cAMP production. Interacts with OPN3; the interaction results in a decrease in MC1R-mediated cAMP signaling and ultimately a decrease in melanin production in melanocytes.

It is found in the cell membrane. Its function is as follows. Receptor for MSH (alpha, beta and gamma) and ACTH. The activity of this receptor is mediated by G proteins which activate adenylate cyclase. Mediates melanogenesis, the production of eumelanin (black/brown) and phaeomelanin (red/yellow), via regulation of cAMP signaling in melanocytes. The sequence is that of Melanocyte-stimulating hormone receptor (MC1R) from Saguinus imperator (Emperor tamarin).